The sequence spans 69 residues: DNA gyrase inhibitor YacG (69 aa).

Residues Cys14, Cys17, Cys33, and Cys37 each coordinate Zn(2+).

The protein belongs to the DNA gyrase inhibitor YacG family. Interacts with GyrB. The cofactor is Zn(2+).

In terms of biological role, inhibits all the catalytic activities of DNA gyrase by preventing its interaction with DNA. Acts by binding directly to the C-terminal domain of GyrB, which probably disrupts DNA binding by the gyrase. The protein is DNA gyrase inhibitor YacG of Aliivibrio salmonicida (strain LFI1238) (Vibrio salmonicida (strain LFI1238)).